Here is a 556-residue protein sequence, read N- to C-terminus: Optineurin (556 aa).

Residues 1–33 form a disordered region; that stretch reads MSSKPQIRPAENGEHCRSKMENGMDSMAPPTLS. The span at 11–22 shows a compositional bias: basic and acidic residues; it reads ENGEHCRSKMEN. The stretch at 38–164 forms a coiled coil; the sequence is EEMVQQMKEL…SELQVKLNIA (127 aa). The LIR motif lies at 168–173; sequence DSFVEI. A coiled-coil region spans residues 219–487; the sequence is VSQLLCCLRN…LLKEQQNLED (269 aa). The segment at 245-274 is disordered; that stretch reads ERLSKMENETSNCLESGTQTNQEEESSEAI. The span at 253–265 shows a compositional bias: polar residues; that stretch reads ETSNCLESGTQTN. The UBAN motif lies at 453-458; the sequence is DFHAER. The interval 496–524 is disordered; it reads MQNRHGARAPDREHSPRLVQRGTGSQEWP. Residues 526–556 form a CCHC NOA-type zinc finger; sequence QRNISIYSCPKCEEILPDLDTLQIHVMDCIN. Zn(2+)-binding residues include cysteine 534, cysteine 537, histidine 550, and cysteine 554.

In terms of assembly, binds to linear ubiquitin chains. Interacts with LC3 family members. Expressed in erythrocytes, skeletal muscle, heart, spleen and brain. Weakly expressed in lung and liver (at protein level).

It localises to the cytoplasm. The protein localises to the perinuclear region. Its subcellular location is the golgi apparatus. It is found in the trans-Golgi network. The protein resides in the cytoplasmic vesicle. It localises to the recycling endosome. The protein localises to the autophagosome. Functionally, probably part of the TNF-alpha signaling pathway that can shift the equilibrium toward induction of cell death. May act by regulating membrane trafficking and cellular morphogenesis. May act as autophagy receptor that interacts directly with both the cargo to become degraded and an autophagy modifier of the MAP1 LC3 family. In Gallus gallus (Chicken), this protein is Optineurin (OPTN).